The chain runs to 224 residues: Homeobox protein Hox-B6 (224 aa).

An Antp-type hexapeptide motif is present at residues 127–132 (VYPWMQ). The homeobox DNA-binding region spans 146 to 205 (GRRGRQTYTRYQTLELEKEFHYNRYLTRRRRIEIAHALCLTERQIKIWFQNRRMKWKKES). The residue at position 214 (Ser214) is a Phosphoserine.

This sequence belongs to the Antp homeobox family.

It is found in the nucleus. Its function is as follows. Sequence-specific transcription factor which is part of a developmental regulatory system that provides cells with specific positional identities on the anterior-posterior axis. This chain is Homeobox protein Hox-B6 (Hoxb6), found in Mus musculus (Mouse).